Here is a 244-residue protein sequence, read N- to C-terminus: Carbonic anhydrase (244 aa).

A signal peptide spans 1-19 (MKGKFSIALMLSACFSASA). In terms of domain architecture, Alpha-carbonic anhydrase spans 23-244 (VHWGYEGSGD…QPLNGRIIIH (222 aa)). Residues Cys46 and Cys199 are joined by a disulfide bond. Residue His84 is the Proton acceptor of the active site. His109, His111, and His128 together coordinate Zn(2+). 195–196 (TT) contributes to the substrate binding site.

This sequence belongs to the alpha-carbonic anhydrase family. It depends on Zn(2+) as a cofactor.

It is found in the periplasm. The enzyme catalyses hydrogencarbonate + H(+) = CO2 + H2O. Reversible hydration of carbon dioxide. The chain is Carbonic anhydrase (cah) from Pectobacterium atrosepticum (strain SCRI 1043 / ATCC BAA-672) (Erwinia carotovora subsp. atroseptica).